A 522-amino-acid polypeptide reads, in one-letter code: Peptide methionine sulfoxide reductase MsrA/MsrB (522 aa).

The Thioredoxin domain maps to leucine 17–alanine 174. Cysteine 68 and cysteine 71 form a disulfide bridge. The tract at residues arginine 199 to arginine 354 is peptide methionine sulfoxide reductase A. Residue cysteine 207 is part of the active site. The MsrB domain occupies aspartate 383–leucine 506. An intrachain disulfide couples cysteine 440 to cysteine 495. Residue cysteine 495 is the Nucleophile of the active site.

In the N-terminal section; belongs to the thioredoxin family. It in the central section; belongs to the MsrA Met sulfoxide reductase family. The protein in the C-terminal section; belongs to the MsrB Met sulfoxide reductase family.

The enzyme catalyses L-methionyl-[protein] + [thioredoxin]-disulfide + H2O = L-methionyl-(S)-S-oxide-[protein] + [thioredoxin]-dithiol. It catalyses the reaction [thioredoxin]-disulfide + L-methionine + H2O = L-methionine (S)-S-oxide + [thioredoxin]-dithiol. The catalysed reaction is L-methionyl-[protein] + [thioredoxin]-disulfide + H2O = L-methionyl-(R)-S-oxide-[protein] + [thioredoxin]-dithiol. In terms of biological role, has an important function as a repair enzyme for proteins that have been inactivated by oxidation. Catalyzes the reversible oxidation-reduction of methionine sulfoxide in proteins to methionine. This is Peptide methionine sulfoxide reductase MsrA/MsrB (msrAB) from Neisseria gonorrhoeae.